A 477-amino-acid chain; its full sequence is C3a anaphylatoxin chemotactic receptor (477 aa).

Residues 1-23 (MESFDADTNSTDLHSRPLFQPQD) lie on the Extracellular side of the membrane. N-linked (GlcNAc...) asparagine glycosylation is present at Asn-9. A helical membrane pass occupies residues 24–46 (IASMVILGLTCLLGLLGNGLVLW). The Cytoplasmic portion of the chain corresponds to 47–57 (VAGVKMKTTVN). A helical membrane pass occupies residues 58 to 80 (TVWFLHLTLADFLCCLSLPFSLA). The Extracellular segment spans residues 81–96 (HLILQGHWPYGLFLCK). Cysteines 95 and 172 form a disulfide. Residues 97–118 (LIPSIIILNMFASVFLLTAISL) traverse the membrane as a helical segment. Residues 119 to 139 (DRCLIVHKPIWCQNHRNVRTA) lie on the Cytoplasmic side of the membrane. A helical membrane pass occupies residues 140-160 (FAICGCVWVVAFVMCVPVFVY). The Extracellular segment spans residues 161-333 (RDLFIMDNRS…TPLMAITITR (173 aa)). Asn-168 carries an N-linked (GlcNAc...) asparagine glycan. 2 positions are modified to sulfotyrosine: Tyr-174 and Tyr-184. N-linked (GlcNAc...) asparagine glycans are attached at residues Asn-197 and Asn-201. Tyr-312 carries the sulfotyrosine modification. A helical membrane pass occupies residues 334-353 (LVVGFLVPFFIMVICYSLIV). The Cytoplasmic segment spans residues 354 to 370 (FRMRKTNFTKSRNKTFR). A helical membrane pass occupies residues 371–393 (VAVAVVTVFFICWTPYHLVGVLL). Over 394 to 410 (LITDPESSLGEAVMSWD) the chain is Extracellular. Residues 411–431 (HMSIALASANSCFNPFLYALL) traverse the membrane as a helical segment. Residues 432–477 (GKDFRKKARQSIKGILEAAFSEELTHSTNCTQDKASSKRNNMSTDV) are Cytoplasmic-facing. At Ser-452 the chain carries Phosphoserine. The residue at position 456 (Thr-456) is a Phosphothreonine.

The protein belongs to the G-protein coupled receptor 1 family. As to quaternary structure, interacts with VGF-derived peptide TLQP-21. In terms of tissue distribution, detected in varying levels in all tissues examined except the spleen. Especially abundant in heart and lung.

The protein resides in the cell membrane. Its function is as follows. Receptor for the chemotactic and inflammatory peptide anaphylatoxin C3a. This receptor stimulates chemotaxis, granule enzyme release and superoxide anion production. This Mus musculus (Mouse) protein is C3a anaphylatoxin chemotactic receptor (C3ar1).